A 158-amino-acid polypeptide reads, in one-letter code: uncharacterized protein (158 aa).

2 disordered regions span residues 1 to 86 and 138 to 158; these read MDFR…DHWW and ASQV…LLGF. A compositionally biased stretch (low complexity) spans 7–76; it reads SPTTCTTPAS…PTPASSGSAA (70 aa).

This is an uncharacterized protein from Homo sapiens (Human).